The following is a 513-amino-acid chain: Sphingolipid C9-methyltransferase 1 (513 aa).

Transmembrane regions (helical) follow at residues 63-83 (FLVA…GGGL) and 85-105 (TAIF…WTVM). Residues 228 to 229 (YT), 265 to 273 (LLDIGCGWG), 291 to 296 (TLARNQ), and 321 to 322 (YR) contribute to the S-adenosyl-L-methionine site.

Belongs to the CFA/CMAS family.

The protein localises to the membrane. It carries out the reaction a (4E,8E)-4-sphinga-4,8-dienine ceramide + S-adenosyl-L-methionine = a 9-methyl-(4E,8E)-sphinga-4,8-dienine ceramide + S-adenosyl-L-homocysteine + H(+). Its pathway is lipid metabolism; sphingolipid metabolism. Functionally, catalyzes methylation of the sphingoid base component of glucosylceramides (GluCers) at the C9-position. Sphingolipid C9-methylation requires 4,8-desaturated ceramides as substrates. Glucosylceramides play important roles in the growth, differentiation and pathogenicity. The methyl group at the C9-position distinguishes fungal glucosylceramides from those of plants and animals, and may thus play a role in host-pathogen interactions enabling the host to recognize the fungal attack and initiate specific defense responses. However, C-9 methylation of GlcCers is not essential for the sensitivity of F.graminearum to plant defensins MsDef1 and RsAFP2. In Gibberella zeae (strain ATCC MYA-4620 / CBS 123657 / FGSC 9075 / NRRL 31084 / PH-1) (Wheat head blight fungus), this protein is Sphingolipid C9-methyltransferase 1.